A 401-amino-acid chain; its full sequence is 3-oxoadipyl-CoA/3-oxo-5,6-dehydrosuberyl-CoA thiolase (401 aa).

The Acyl-thioester intermediate role is filled by C90. Residues H357 and C387 each act as proton acceptor in the active site.

It belongs to the thiolase-like superfamily. Thiolase family.

The enzyme catalyses succinyl-CoA + acetyl-CoA = 3-oxoadipyl-CoA + CoA. It catalyses the reaction 2,3-didehydroadipoyl-CoA + acetyl-CoA = 3-oxo-5,6-didehydrosuberyl-CoA + CoA. Its pathway is aromatic compound metabolism; phenylacetate degradation. In terms of biological role, catalyzes the thiolytic cleavage of the beta-keto C8 intermediate 3-oxo-5,6-dehydrosuberyl-CoA with CoA to yield the C6 intermediate 2,3-dehydroadipyl-CoA and acetyl-CoA. Besides it catalyzes also the last step of the pathway, in which 3-oxoadipyl-CoA similarly is cleaved to acetyl-CoA and succinyl-CoA. The polypeptide is 3-oxoadipyl-CoA/3-oxo-5,6-dehydrosuberyl-CoA thiolase (paaJ) (Escherichia coli (strain K12)).